The following is a 142-amino-acid chain: Large ribosomal subunit protein uL13 (142 aa).

The protein belongs to the universal ribosomal protein uL13 family. Part of the 50S ribosomal subunit.

Its function is as follows. This protein is one of the early assembly proteins of the 50S ribosomal subunit, although it is not seen to bind rRNA by itself. It is important during the early stages of 50S assembly. The protein is Large ribosomal subunit protein uL13 of Herminiimonas arsenicoxydans.